A 192-amino-acid chain; its full sequence is uncharacterized protein (192 aa).

This is an uncharacterized protein from Sinorhizobium fredii (strain NBRC 101917 / NGR234).